The chain runs to 109 residues: MFGKGGMGNLMKQAQQMQEKMQRMQEEIAQLEVTGESGAGLVKVTINGAHNCRRVEVDPSLLEDDKDMLEDLIAAAFNDAARRIAETQKEKMAAVSSGMQLPPGFKMPF.

Residues 1–23 (MFGKGGMGNLMKQAQQMQEKMQR) are disordered.

Belongs to the YbaB/EbfC family. As to quaternary structure, homodimer.

It is found in the cytoplasm. The protein localises to the nucleoid. In terms of biological role, binds to DNA and alters its conformation. May be involved in regulation of gene expression, nucleoid organization and DNA protection. In Sodalis glossinidius (strain morsitans), this protein is Nucleoid-associated protein SG0690.